Reading from the N-terminus, the 1015-residue chain is DNA polymerase catalytic subunit (1015 aa).

It belongs to the DNA polymerase type-B family. Forms a complex with the ssDNA-binding protein BALF2, the DNA polymerase processivity factor BMRF1, and the alkaline exonuclease BGLF5. Interacts with the putative helicase-primase complex composed of BBLF4, BSLF1 and BBLF2/3 proteins; these interactions may coordinate leading and lagging strand DNA synthesis at the replication fork.

The protein localises to the host nucleus. The enzyme catalyses DNA(n) + a 2'-deoxyribonucleoside 5'-triphosphate = DNA(n+1) + diphosphate. Its function is as follows. Replicates viral genomic DNA in the late phase of lytic infection, producing long concatemeric DNA. The replication complex is composed of six viral proteins: the DNA polymerase, processivity factor, primase, primase-associated factor, helicase, and ssDNA-binding protein. This Epstein-Barr virus (strain B95-8) (HHV-4) protein is DNA polymerase catalytic subunit.